The chain runs to 451 residues: UDP-N-acetylmuramoylalanine--D-glutamate ligase (451 aa).

Residue 119–125 (GSNGKTT) participates in ATP binding.

Belongs to the MurCDEF family.

The protein localises to the cytoplasm. The enzyme catalyses UDP-N-acetyl-alpha-D-muramoyl-L-alanine + D-glutamate + ATP = UDP-N-acetyl-alpha-D-muramoyl-L-alanyl-D-glutamate + ADP + phosphate + H(+). It participates in cell wall biogenesis; peptidoglycan biosynthesis. In terms of biological role, cell wall formation. Catalyzes the addition of glutamate to the nucleotide precursor UDP-N-acetylmuramoyl-L-alanine (UMA). In Streptococcus agalactiae serotype III (strain NEM316), this protein is UDP-N-acetylmuramoylalanine--D-glutamate ligase.